We begin with the raw amino-acid sequence, 771 residues long: Protein lin-54 homolog (771 aa).

2 disordered regions span residues 21-44 (AMDE…SAQV) and 68-105 (TNAK…IPSL). Positions 72–92 (STTSSTTQLLLTPSSSSSTTT) are enriched in low complexity. 3 positions are modified to phosphoserine: Ser-288, Ser-292, and Ser-308. The CRC domain maps to 544 to 657 (PRKPCNCTRS…KCMGCKNFEE (114 aa)). The interval 546-559 (KPCNCTRSQCLKLY) is DNA-binding. Zn(2+) is bound by residues Cys-548, Cys-550, Cys-555, Cys-560, Cys-562, Cys-569, Cys-572, Cys-574, and Cys-577. A linker region spans residues 606–619 (IGKGKEGESDRRHS). Zn(2+) is bound by residues Cys-622, Cys-624, Cys-629, Cys-634, Cys-636, Cys-643, Cys-647, Cys-649, and Cys-652. The tract at residues 622 to 635 (CNCKKSGCLKNYCE) is DNA-binding.

The protein belongs to the lin-54 family. Component of the DREAM complex.

It localises to the nucleus. Component of the DREAM complex, a multiprotein complex that can both act as a transcription activator or repressor depending on the context. Specifically recognizes the consensus motif 5'-TTYRAA-3' in target DNA. The chain is Protein lin-54 homolog (lin54) from Danio rerio (Zebrafish).